Reading from the N-terminus, the 340-residue chain is uncharacterized protein (340 aa).

The protein resides in the virion. This is an uncharacterized protein from Acanthamoeba polyphaga (Amoeba).